The chain runs to 149 residues: Large ribosomal subunit protein uL11 (149 aa).

The protein belongs to the universal ribosomal protein uL11 family. Part of the ribosomal stalk of the 50S ribosomal subunit. Interacts with L10 and the large rRNA to form the base of the stalk. L10 forms an elongated spine to which L12 dimers bind in a sequential fashion forming a multimeric L10(L12)X complex. One or more lysine residues are methylated.

In terms of biological role, forms part of the ribosomal stalk which helps the ribosome interact with GTP-bound translation factors. The chain is Large ribosomal subunit protein uL11 from Methylorubrum extorquens (strain CM4 / NCIMB 13688) (Methylobacterium extorquens).